The following is a 103-amino-acid chain: Large ribosomal subunit protein bL21 (103 aa).

The protein belongs to the bacterial ribosomal protein bL21 family. Part of the 50S ribosomal subunit. Contacts protein L20.

Its function is as follows. This protein binds to 23S rRNA in the presence of protein L20. In Clostridium kluyveri (strain NBRC 12016), this protein is Large ribosomal subunit protein bL21.